Here is a 473-residue protein sequence, read N- to C-terminus: MTKNIGKITQIISAVVDVKFTNNGKLPEILNALECYNDTRRVVLEVAQHIGDDTVRCIAMDSMEGLVRGVEVIDTGSPIRIPVGTETLGRIMNVVGEPIDGKGDIKSSNISSIYKPAPDFTNQSTERNILVTGIKVIDLLAPYTKGGKIGLFGGAGVGKTVLIMELINNVAKAHGGYTVFAGVGERTREGNDLYHEMIDSGVINLAEPEKSKVALVYGQMNEPPGARARVALSGLTIAESFRDMNEGQDVLFFVDNIFRFTQAGSEVSALLGRIPSAVGYQPTLATDMGELQERITSTKHGSITSVQAIYVPADDLTDPAPATSFAHLDATTVLSRQIAEFGIYPAVDPLDSNSQVLDPMIVGEEHYSVARQVQQVLQTYKSLQDIITILGMDELSEEDKLTVARARKIQRFLSQPFHVAEVFTGAAGKFVNLADTIAGFKGLVEGKYDDLPEAAFYMVGTIDEAIKKAQTLK.

Residue 153–160 (GGAGVGKT) coordinates ATP.

This sequence belongs to the ATPase alpha/beta chains family. F-type ATPases have 2 components, CF(1) - the catalytic core - and CF(0) - the membrane proton channel. CF(1) has five subunits: alpha(3), beta(3), gamma(1), delta(1), epsilon(1). CF(0) has three main subunits: a(1), b(2) and c(9-12). The alpha and beta chains form an alternating ring which encloses part of the gamma chain. CF(1) is attached to CF(0) by a central stalk formed by the gamma and epsilon chains, while a peripheral stalk is formed by the delta and b chains.

It is found in the cell inner membrane. It catalyses the reaction ATP + H2O + 4 H(+)(in) = ADP + phosphate + 5 H(+)(out). Produces ATP from ADP in the presence of a proton gradient across the membrane. The catalytic sites are hosted primarily by the beta subunits. This is ATP synthase subunit beta from Rickettsia rickettsii (strain Iowa).